The sequence spans 301 residues: Probable alpha-L-glutamate ligase (301 aa).

Positions 104–287 constitute an ATP-grasp domain; the sequence is LQLLSRRGIG…VAGIIIEHIE (184 aa). Residues Lys-141, 178–179, Asp-187, and 211–213 each bind ATP; these read EY and RSN. Mg(2+)-binding residues include Asp-248, Glu-260, and Asn-262. Residues Asp-248, Glu-260, and Asn-262 each contribute to the Mn(2+) site.

It belongs to the RimK family. The cofactor is Mg(2+). It depends on Mn(2+) as a cofactor.

This Pseudomonas fluorescens (strain ATCC BAA-477 / NRRL B-23932 / Pf-5) protein is Probable alpha-L-glutamate ligase.